We begin with the raw amino-acid sequence, 241 residues long: MIQPRKELDGVLLVDKPTAHTSHDVVARLRRKLNMKRIGHAGTLDPMATGLMILLIGKATTISQYLTSLDKEYEGTIELGKVTDSQDADGEVLSTLPVPPFTEAEIRAAMAGFMGDQYQTPPMYSAIKVDGVPLYKTARKGGEVEREPRFIRVSSFELTRFALPQFDFRLRCTKGTYVRTIAHDLGQRLGCGAHLAALRRTATDKFKLADALTLDAIEALPLPEIEKRLIPVYQAAPSIVG.

The Nucleophile role is filled by aspartate 45.

Belongs to the pseudouridine synthase TruB family. Type 1 subfamily.

It catalyses the reaction uridine(55) in tRNA = pseudouridine(55) in tRNA. Its function is as follows. Responsible for synthesis of pseudouridine from uracil-55 in the psi GC loop of transfer RNAs. This is tRNA pseudouridine synthase B from Opitutus terrae (strain DSM 11246 / JCM 15787 / PB90-1).